The chain runs to 508 residues: Aromatic-L-amino-acid decarboxylase (508 aa).

Thr82 provides a ligand contact to substrate. Positions 148 and 149 each coordinate pyridoxal 5'-phosphate. His192 is a substrate binding site. The pyridoxal 5'-phosphate site is built by Thr246 and Asn300. Lys303 carries the N6-(pyridoxal phosphate)lysine modification.

This sequence belongs to the group II decarboxylase family. In terms of assembly, homodimer. The cofactor is pyridoxal 5'-phosphate.

It catalyses the reaction L-dopa + H(+) = dopamine + CO2. The catalysed reaction is 5-hydroxy-L-tryptophan + H(+) = serotonin + CO2. Functionally, catalyzes the decarboxylation of L-3,4-dihydroxyphenylalanine (DOPA) to dopamine, L-5-hydroxytryptophan to serotonin and L-tryptophan to tryptamine. The chain is Aromatic-L-amino-acid decarboxylase (Ddc) from Manduca sexta (Tobacco hawkmoth).